Consider the following 326-residue polypeptide: Peroxidase 3 (326 aa).

The first 24 residues, 1–24 (MNCLIAIALSVSFFLVGIVGPIQA), serve as a signal peptide directing secretion. 4 cysteine pairs are disulfide-bonded: Cys35–Cys113, Cys68–Cys73, Cys119–Cys321, and Cys198–Cys231. His66 (proton acceptor) is an active-site residue. 5 residues coordinate Ca(2+): Asp67, Val70, Gly72, Asp74, and Ser76. N-linked (GlcNAc...) asparagine glycosylation is found at Asn80 and Asn138. Substrate is bound at residue Pro161. Residue Asn166 is glycosylated (N-linked (GlcNAc...) asparagine). A heme b-binding site is contributed by His191. A Ca(2+)-binding site is contributed by Thr192. Asn207 and Asn237 each carry an N-linked (GlcNAc...) asparagine glycan. Ca(2+) contacts are provided by Asp244, Ser247, and Asp252.

Belongs to the peroxidase family. Classical plant (class III) peroxidase subfamily. Heme b serves as cofactor. It depends on Ca(2+) as a cofactor. As to expression, expressed in root cells.

The protein resides in the secreted. The enzyme catalyses 2 a phenolic donor + H2O2 = 2 a phenolic radical donor + 2 H2O. Its function is as follows. Removal of H(2)O(2), oxidation of toxic reductants, biosynthesis and degradation of lignin, suberization, auxin catabolism, response to environmental stresses such as wounding, pathogen attack and oxidative stress. These functions might be dependent on each isozyme/isoform in each plant tissue. In Arabidopsis thaliana (Mouse-ear cress), this protein is Peroxidase 3 (PER3).